We begin with the raw amino-acid sequence, 428 residues long: Enolase (428 aa).

Position 163 (Gln163) interacts with (2R)-2-phosphoglycerate. Catalysis depends on Glu205, which acts as the Proton donor. Mg(2+) is bound by residues Asp242, Glu285, and Asp312. Positions 337, 366, 367, and 388 each coordinate (2R)-2-phosphoglycerate. The active-site Proton acceptor is Lys337.

This sequence belongs to the enolase family. Mg(2+) serves as cofactor.

It localises to the cytoplasm. Its subcellular location is the secreted. The protein resides in the cell surface. It carries out the reaction (2R)-2-phosphoglycerate = phosphoenolpyruvate + H2O. Its pathway is carbohydrate degradation; glycolysis; pyruvate from D-glyceraldehyde 3-phosphate: step 4/5. Functionally, catalyzes the reversible conversion of 2-phosphoglycerate (2-PG) into phosphoenolpyruvate (PEP). It is essential for the degradation of carbohydrates via glycolysis. The sequence is that of Enolase from Polynucleobacter asymbioticus (strain DSM 18221 / CIP 109841 / QLW-P1DMWA-1) (Polynucleobacter necessarius subsp. asymbioticus).